The following is a 345-amino-acid chain: MFSSLYPLARASLFKMDAEDAHHLTLRMLGAAGRTGLACALSPRVPDAPRTVMGLSFRNPVGLAAGLDKDGAAIDGFAALGFGFIEVGTVTPRAQPGNPRPRMFRLPEADAIINRMGFNNSGVDQFVKNVQAARYRGVLGLNIGKNADTPIERAADDYLYCLERVYPFASYVTINISSPNTKNLRQLQGAGELDALLAALKDKQRRLADLHGKLVPLALKIAPDLDDEQVKEIAATLLRHDIEGVIATNTTLSREAVKGLPHADEAGGLSGRPVFDASNAVIRKLRAELGDAVPIIGVGGIFSGEDARAKLAAGAALVQLYTGFIYRGPALVAECVKAIARGEAR.

Residues 65–69 (AGLDK) and Thr89 each bind FMN. Lys69 is a binding site for substrate. 114 to 118 (NRMGF) contacts substrate. Asn142 and Asn175 together coordinate FMN. Asn175 is a substrate binding site. The active-site Nucleophile is Ser178. Asn180 contacts substrate. Residues Lys220 and Thr248 each coordinate FMN. Residue 249–250 (NT) participates in substrate binding. Residues Gly271, Gly300, and 321 to 322 (YT) contribute to the FMN site.

It belongs to the dihydroorotate dehydrogenase family. Type 2 subfamily. As to quaternary structure, monomer. Requires FMN as cofactor.

The protein localises to the cell membrane. The catalysed reaction is (S)-dihydroorotate + a quinone = orotate + a quinol. Its pathway is pyrimidine metabolism; UMP biosynthesis via de novo pathway; orotate from (S)-dihydroorotate (quinone route): step 1/1. In terms of biological role, catalyzes the conversion of dihydroorotate to orotate with quinone as electron acceptor. The protein is Dihydroorotate dehydrogenase (quinone) of Burkholderia mallei (strain NCTC 10247).